Consider the following 291-residue polypeptide: Protease HtpX (291 aa).

2 helical membrane-spanning segments follow: residues 4 to 24 and 36 to 56; these read IALF…VLNI and LSGL…VSLL. A Zn(2+)-binding site is contributed by His143. Residue Glu144 is part of the active site. Position 147 (His147) interacts with Zn(2+). The next 2 helical transmembrane spans lie at 151-171 and 199-219; these read GDMI…IFLS and FIVS…LTMW. Glu225 is a binding site for Zn(2+).

This sequence belongs to the peptidase M48B family. It depends on Zn(2+) as a cofactor.

The protein localises to the cell inner membrane. The protein is Protease HtpX of Aliivibrio salmonicida (strain LFI1238) (Vibrio salmonicida (strain LFI1238)).